The primary structure comprises 1277 residues: NPC intracellular cholesterol transporter 1 (1277 aa).

Residues 1-22 (MGAHHPALGLLLLLLCPAQVFS) form the signal peptide. The Lumenal portion of the chain corresponds to 23-269 (QSCVWYGECG…WRIWGLDAMY (247 aa)). Disulfide bonds link C25–C74, C31–C42, C63–C109, C75–C113, C97–C238, C100–C160, C177–C184, C227–C243, and C240–C247. N41 is a cholesterol binding site. N70 carries an N-linked (GlcNAc...) asparagine glycan. Q79 contacts cholesterol. Residues N122 and N137 are each glycosylated (N-linked (GlcNAc...) asparagine). Residues 175–205 (LLCGRDARACNATNWIEYMFNKDNGQAPFTI) form an important for cholesterol binding and cholesterol transfer from NPC1 to liposomes region. Residues N185, N222, and N228 are each glycosylated (N-linked (GlcNAc...) asparagine). The chain crosses the membrane as a helical span at residues 270–290 (VIMWVTYVAFLFVFFGALLAV). The Cytoplasmic segment spans residues 291 to 350 (WCHRRRYFVSEYTPIDSNIAFSVNSSDKGEASCCDPLGAAFDDCLRRMFTKWGAFCVRNP). The helical transmembrane segment at 351-371 (TCIIFFSLAFITVCSSGLVFV) threads the bilayer. Topologically, residues 372–621 (QVTTNPVELW…ELNRESNSDV (250 aa)) are lumenal. N-linked (GlcNAc...) asparagine glycosylation is found at N414, N459, N478, and N524. Intrachain disulfides connect C468-C479 and C516-C533. The SSD domain occupies 620–785 (DVFTVIISYV…ITCFVSLLGL (166 aa)). The chain crosses the membrane as a helical span at residues 622–642 (FTVIISYVVMFLYISLALGHI). The Cytoplasmic segment spans residues 643 to 653 (QSCSRLLVDSK). The helical transmembrane segment at 654–674 (ISLGIAGILIVLSSVACSLGI) threads the bilayer. Residues 675–683 (FSYMGMPLT) lie on the Lumenal side of the membrane. The helical transmembrane segment at 684–704 (LIVIEVIPFLVLAVGVDNIFI) threads the bilayer. At 705–730 (LVQTYQRDERLQEETLDQQLGRILGE) the chain is on the cytoplasmic side. The helical transmembrane segment at 731-751 (VAPTMFLSSFSETSAFFFGAL) threads the bilayer. Over 752–759 (SSMPAVHT) the chain is Lumenal. Residues 760–780 (FSLFAGMAVLIDFLLQITCFV) form a helical membrane-spanning segment. Residues 781 to 832 (SLLGLDIKRQEKNHLDILCCVRGADDGQGSHASESYLFRFFKNYFAPLLLKD) lie on the Cytoplasmic side of the membrane. The helical transmembrane segment at 833 to 853 (WLRPIVVAVFVGVLSFSVAVV) threads the bilayer. Topologically, residues 854 to 1097 (NKVDIGLDQS…EQYLTIIDDT (244 aa)) are lumenal. N-linked (GlcNAc...) asparagine glycosylation is found at N868 and N898. A disulfide bridge connects residues C909 and C914. N-linked (GlcNAc...) asparagine glycosylation is found at N916, N961, N968, and N1063. Disulfide bonds link C956–C1011, C957–C979, and C967–C976. Residues 1098 to 1118 (IFNLSVSLGSIFLVTLVVLGC) traverse the membrane as a helical segment. Residues 1119-1123 (ELWSA) are Cytoplasmic-facing. The chain crosses the membrane as a helical span at residues 1124 to 1144 (VIMCITIAMILVNMFGVMWLW). Residue G1145 is a topological domain, lumenal. Residues 1146-1166 (ISLNAVSLVNLVMSCGISVEF) form a helical membrane-spanning segment. Residues 1167–1194 (CSHITRAFTMSTKGSRVSRAEEALAHMG) lie on the Cytoplasmic side of the membrane. The chain crosses the membrane as a helical span at residues 1195 to 1215 (SSVFSGITLTKFGGIVVLAFA). The Lumenal segment spans residues 1216-1226 (KSQIFEIFYFR). Residues 1227–1247 (MYLAMVLLGATHGLIFLPVLL) form a helical membrane-spanning segment. Residues 1248–1277 (SYIGPSVNKAKRHTTYERYRGTERERLLNF) are Cytoplasmic-facing. The tract at residues 1274–1277 (LLNF) is required for location in lysosomes. Residues 1274-1277 (LLNF) carry the Di-leucine motif motif.

It belongs to the patched family. As to quaternary structure, interacts (via the second lumenal domain) with NPC2. Interacts with TMEM97; the interaction may decrease NPC1 availability to the cell. Interacts with TIM1. Interacts with SLC38A9; this interaction inhibits cholesterol-mediated mTORC1 activation via its sterol transport activity. In terms of processing, N-glycosylated. Detected in liver (at protein level). Ubiquitous. Detected in adult heart, spleen, lung, liver, skeletal muscle, kidney, testis.

Its subcellular location is the late endosome membrane. It localises to the lysosome membrane. It catalyses the reaction cholesterol(in) = cholesterol(out). Functionally, intracellular cholesterol transporter which acts in concert with NPC2 and plays an important role in the egress of cholesterol from the endosomal/lysosomal compartment. Unesterified cholesterol that has been released from LDLs in the lumen of the late endosomes/lysosomes is transferred by NPC2 to the cholesterol-binding pocket in the N-terminal domain of NPC1. Cholesterol binds to NPC1 with the hydroxyl group buried in the binding pocket. May play a role in vesicular trafficking in glia, a process that may be crucial for maintaining the structural and functional integrity of nerve terminals. Inhibits cholesterol-mediated mTORC1 activation throught its interaction with SLC38A9. The sequence is that of NPC intracellular cholesterol transporter 1 from Mus musculus (Mouse).